Here is a 1169-residue protein sequence, read N- to C-terminus: DNA-directed RNA polymerase subunit beta (1169 aa).

This sequence belongs to the RNA polymerase beta chain family. In terms of assembly, the RNAP catalytic core consists of 2 alpha, 1 beta, 1 beta' and 1 omega subunit. When a sigma factor is associated with the core the holoenzyme is formed, which can initiate transcription. Interacts with RbpA, which partially restores Rif-inhibited transcription.

It carries out the reaction RNA(n) + a ribonucleoside 5'-triphosphate = RNA(n+1) + diphosphate. DNA-dependent RNA polymerase catalyzes the transcription of DNA into RNA using the four ribonucleoside triphosphates as substrates. This subunit often mutates to generate rifampicin (Rif) resistance. Interaction with RbpA partially restores Rif-inhibited transcription; once the subunit is Rif-resistant however RbpA no longer stimulates transcription. The protein is DNA-directed RNA polymerase subunit beta of Mycolicibacterium smegmatis (strain ATCC 700084 / mc(2)155) (Mycobacterium smegmatis).